Reading from the N-terminus, the 64-residue chain is MRLTNVLFKKVKSKRIMVVLESVVSGHQFNAFRDRLADKLEIIRFDPYIQQESLYRERKKIRSA.

It belongs to the bacterial ribosomal protein bL33 family. Component of the mitochondrial ribosome large subunit (39S) which comprises a 16S rRNA and about 50 distinct proteins.

The protein resides in the mitochondrion. In Drosophila melanogaster (Fruit fly), this protein is Large ribosomal subunit protein bL33m (mRpL33).